A 618-amino-acid polypeptide reads, in one-letter code: Structural protein ORF618 (618 aa).

Residues 570-598 (ILEAKRQIEDRAKGLSKNLDNTVTEIMNA) are a coiled coil.

The protein resides in the virion. The polypeptide is Structural protein ORF618 (Acidianus two-tailed virus (ATV)).